Reading from the N-terminus, the 191-residue chain is MIRISDAAQAHFAKLLANQEEGTQIRVFVINPGTPNAECGVSYCPPDAVEATDTALKFDLLTAYVDELSAPYLEDAEIDFVTDQLGSQLTLKAPNAKMRKVADDAPLMERVEYMLQSQINPQLAGHGGRVSLMEITEDGYAILQFGGGCNGCSMVDVTLKEGIEKQLLNEFPELKGVRDLTEHQRGEHSYY.

Positions 149 and 152 each coordinate [4Fe-4S] cluster.

Belongs to the NfuA family. As to quaternary structure, homodimer. It depends on [4Fe-4S] cluster as a cofactor.

Functionally, involved in iron-sulfur cluster biogenesis. Binds a 4Fe-4S cluster, can transfer this cluster to apoproteins, and thereby intervenes in the maturation of Fe/S proteins. Could also act as a scaffold/chaperone for damaged Fe/S proteins. The protein is Fe/S biogenesis protein NfuA of Escherichia coli O139:H28 (strain E24377A / ETEC).